Here is a 724-residue protein sequence, read N- to C-terminus: Long-chain-fatty-acid--CoA ligase ACSBG1 (724 aa).

The tract at residues 1-30 (MPRNSGAGYGCPHGDPSMLDSRETPQESRQ) is disordered. The span at 20–30 (DSRETPQESRQ) shows a compositional bias: basic and acidic residues. Serine 53 and serine 56 each carry phosphoserine. Residues 282–290 (TSGTTGNPK), 472–477 (AGYGLS), aspartate 550, and arginine 565 contribute to the ATP site. A Phosphotyrosine modification is found at tyrosine 658. Position 701 (lysine 701) interacts with ATP.

This sequence belongs to the ATP-dependent AMP-binding enzyme family. Bubblegum subfamily. Expressed primarily in brain. Expressed at lower level in testis and adrenal gland. Present in all regions of brain except pituitary.

The protein localises to the cytoplasm. It is found in the cytoplasmic vesicle. The protein resides in the microsome. Its subcellular location is the endoplasmic reticulum. It localises to the cell membrane. The enzyme catalyses a long-chain fatty acid + ATP + CoA = a long-chain fatty acyl-CoA + AMP + diphosphate. It catalyses the reaction (E)-hexadec-2-enoate + ATP + CoA = (2E)-hexadecenoyl-CoA + AMP + diphosphate. The catalysed reaction is hexadecanoate + ATP + CoA = hexadecanoyl-CoA + AMP + diphosphate. Its function is as follows. Catalyzes the conversion of fatty acids such as long-chain and very long-chain fatty acids to their active form acyl-CoAs for both synthesis of cellular lipids, and degradation via beta-oxidation. Can activate diverse saturated, monosaturated and polyunsaturated fatty acids. This chain is Long-chain-fatty-acid--CoA ligase ACSBG1, found in Homo sapiens (Human).